Consider the following 147-residue polypeptide: UPF0306 protein YE0465 (147 aa).

Belongs to the UPF0306 family.

The protein is UPF0306 protein YE0465 of Yersinia enterocolitica serotype O:8 / biotype 1B (strain NCTC 13174 / 8081).